The chain runs to 383 residues: MTAPADLSPTLQLACDLIRRPSVTPVDADCQTVMMQRLGDAGFKLEPMRIEDVDNFWATHGTTDGPVLCFAGHTDVVPTGPLQNWQNDPFDALIDEHGMLCGRGAADMKGSLAAMLVAAERFVADHPDHKGSVAFLITSDEEGPAHHGTKAVVERLAARNERLDWCIVGEPSSTTLVGDVVKNGRRGSLGATLTVRGKQGHVAYPHLAKNPIHLAAPALAELAAEHWDHGNDFFPPTSFQISNLNAGTGATNVIPGDLVAVFNFRFSTESTVEGLQQRVADILDRHELDWHVDWALSGLPFLTEPGALLDAVSSSIKSVTGRETKASTSGGTSDGRFIATLGTQVVELGPVNATIHQVNERILASDLDVLTEIYYQTLVKLLA.

His73 is a Zn(2+) binding site. The active site involves Asp75. Asp107 serves as a coordination point for Zn(2+). Catalysis depends on Glu141, which acts as the Proton acceptor. Residues Glu142, Glu170, and His356 each contribute to the Zn(2+) site.

The protein belongs to the peptidase M20A family. DapE subfamily. As to quaternary structure, homodimer. The cofactor is Zn(2+). It depends on Co(2+) as a cofactor.

The catalysed reaction is N-succinyl-(2S,6S)-2,6-diaminopimelate + H2O = (2S,6S)-2,6-diaminopimelate + succinate. Its pathway is amino-acid biosynthesis; L-lysine biosynthesis via DAP pathway; LL-2,6-diaminopimelate from (S)-tetrahydrodipicolinate (succinylase route): step 3/3. In terms of biological role, catalyzes the hydrolysis of N-succinyl-L,L-diaminopimelic acid (SDAP), forming succinate and LL-2,6-diaminopimelate (DAP), an intermediate involved in the bacterial biosynthesis of lysine and meso-diaminopimelic acid, an essential component of bacterial cell walls. The polypeptide is Succinyl-diaminopimelate desuccinylase (Pseudomonas syringae pv. syringae (strain B728a)).